The following is a 78-amino-acid chain: Acyl carrier protein (78 aa).

Residues 2–77 form the Carrier domain; sequence SDIEQRVKQA…SAIDYVTKKL (76 aa). An O-(pantetheine 4'-phosphoryl)serine modification is found at Ser-37.

This sequence belongs to the acyl carrier protein (ACP) family. In terms of processing, 4'-phosphopantetheine is transferred from CoA to a specific serine of apo-ACP by AcpS. This modification is essential for activity because fatty acids are bound in thioester linkage to the sulfhydryl of the prosthetic group.

Its subcellular location is the cytoplasm. Its pathway is lipid metabolism; fatty acid biosynthesis. Its function is as follows. Carrier of the growing fatty acid chain in fatty acid biosynthesis. The sequence is that of Acyl carrier protein from Acinetobacter baumannii (strain AB307-0294).